The sequence spans 231 residues: Elongation factor 1-delta 2 (231 aa).

At alanine 2 the chain carries N-acetylalanine. A GST C-terminal domain is found at 11-73; it reads SGLKKLDEHL…LRISGVSAEG (63 aa). Positions 82 to 136 are disordered; it reads SPITEEAVATPPAADSKDTAAEEEDDDDVDLFGEETEEEKKAAEERAASVKASTK. Over residues 102-118 the composition is skewed to acidic residues; sequence AEEEDDDDVDLFGEETE. A compositionally biased stretch (basic and acidic residues) spans 119 to 129; it reads EEKKAAEERAA.

The protein belongs to the EF-1-beta/EF-1-delta family. In terms of assembly, EF-1 is composed of 4 subunits: alpha, beta (1B-alpha=beta'), delta (1B-beta), and gamma (1B-gamma).

In terms of biological role, EF-1-beta and EF-1-delta stimulate the exchange of GDP bound to EF-1-alpha to GTP. This Arabidopsis thaliana (Mouse-ear cress) protein is Elongation factor 1-delta 2.